Consider the following 224-residue polypeptide: Urease accessory protein UreF (224 aa).

Belongs to the UreF family. UreD, UreF and UreG form a complex that acts as a GTP-hydrolysis-dependent molecular chaperone, activating the urease apoprotein by helping to assemble the nickel containing metallocenter of UreC. The UreE protein probably delivers the nickel.

It is found in the cytoplasm. Functionally, required for maturation of urease via the functional incorporation of the urease nickel metallocenter. This Ectopseudomonas mendocina (strain ymp) (Pseudomonas mendocina) protein is Urease accessory protein UreF.